A 234-amino-acid chain; its full sequence is Large ribosomal subunit protein uL1 (234 aa).

Belongs to the universal ribosomal protein uL1 family. Part of the 50S ribosomal subunit.

Binds directly to 23S rRNA. The L1 stalk is quite mobile in the ribosome, and is involved in E site tRNA release. Its function is as follows. Protein L1 is also a translational repressor protein, it controls the translation of the L11 operon by binding to its mRNA. This chain is Large ribosomal subunit protein uL1, found in Prochlorococcus marinus (strain SARG / CCMP1375 / SS120).